The sequence spans 1026 residues: Multidrug resistance protein MdtC (1026 aa).

11 helical membrane-spanning segments follow: residues 15–35 (ILIAAAITLCGILGFRLLPVA), 333–353 (EVEETLAISVALVILVVFLFL), 360–380 (LIPAVAVPVSLIGTFAAMYLC), 387–407 (LSLMALTIATGFVVDDAIVVL), 431–451 (VGFTVISMSLSLVAVFLPLLL), 463–483 (FAVTLSVAIGISLVVSLTLTP), 528–548 (LVGVVFLGTVALNIWLYIAIP), 853–873 (LILIVAAIATVYIVLGILYES), 897–917 (LFNAPFSLIALIGIMLLIGIV), 953–973 (PIMMTTLAALFGALPLVLSGG), and 984–1004 (ITIVGGLVMSQLLTLYTTPVV).

It belongs to the resistance-nodulation-cell division (RND) (TC 2.A.6) family. MdtC subfamily. Part of a tripartite efflux system composed of MdtA, MdtB and MdtC. MdtC forms a heteromultimer with MdtB.

It localises to the cell inner membrane. This Salmonella enteritidis PT4 (strain P125109) protein is Multidrug resistance protein MdtC.